A 362-amino-acid chain; its full sequence is 3-dehydroquinate synthase (362 aa).

Residues 71 to 76 (DGEQYK), 105 to 109 (GVIGD), 129 to 130 (TT), Lys142, Lys151, and 169 to 172 (CLQT) contribute to the NAD(+) site. Glu184, His247, and His264 together coordinate Zn(2+).

It belongs to the sugar phosphate cyclases superfamily. Dehydroquinate synthase family. Co(2+) is required as a cofactor. Requires Zn(2+) as cofactor. The cofactor is NAD(+).

The protein resides in the cytoplasm. The enzyme catalyses 7-phospho-2-dehydro-3-deoxy-D-arabino-heptonate = 3-dehydroquinate + phosphate. It functions in the pathway metabolic intermediate biosynthesis; chorismate biosynthesis; chorismate from D-erythrose 4-phosphate and phosphoenolpyruvate: step 2/7. In terms of biological role, catalyzes the conversion of 3-deoxy-D-arabino-heptulosonate 7-phosphate (DAHP) to dehydroquinate (DHQ). The protein is 3-dehydroquinate synthase of Cronobacter sakazakii (strain ATCC BAA-894) (Enterobacter sakazakii).